Consider the following 249-residue polypeptide: Tetrahydromethanopterin S-methyltransferase subunit A (249 aa).

Residues 2–225 are Cytoplasmic-facing; it reads PEKAEPAEGW…YMAGYLSGRT (224 aa). His88 lines the 5-hydroxybenzimidazolylcob(I)amide pocket. The helical transmembrane segment at 226-246 threads the bilayer; it reads MGLLIGIISGMIFLFLPMVVL. At 247–249 the chain is on the extracellular side; that stretch reads GGV.

The protein belongs to the MtrA family. As to quaternary structure, the complex is composed of 8 subunits; MtrA, MtrB, MtrC, MtrD, MtrE, MtrF, MtrG and MtrH. It depends on 5-hydroxybenzimidazolylcob(I)amide as a cofactor.

The protein resides in the cell membrane. The catalysed reaction is 5-methyl-5,6,7,8-tetrahydromethanopterin + coenzyme M + 2 Na(+)(in) = 5,6,7,8-tetrahydromethanopterin + methyl-coenzyme M + 2 Na(+)(out). The protein operates within one-carbon metabolism; methanogenesis from CO(2); methyl-coenzyme M from 5,10-methylene-5,6,7,8-tetrahydromethanopterin: step 2/2. Part of a complex that catalyzes the formation of methyl-coenzyme M and tetrahydromethanopterin from coenzyme M and methyl-tetrahydromethanopterin. This is an energy-conserving, sodium-ion translocating step. The polypeptide is Tetrahydromethanopterin S-methyltransferase subunit A (Methanopyrus kandleri (strain AV19 / DSM 6324 / JCM 9639 / NBRC 100938)).